A 343-amino-acid polypeptide reads, in one-letter code: Holliday junction branch migration complex subunit RuvB (343 aa).

A large ATPase domain (RuvB-L) region spans residues 1–178; that stretch reads MNFVQQNREG…FGMILELQFY (178 aa). ATP contacts are provided by residues leucine 17, arginine 18, glycine 59, lysine 62, threonine 63, threonine 64, 125-127, arginine 168, tyrosine 178, and arginine 215; that span reads EDY. Residue threonine 63 coordinates Mg(2+). Residues 179–249 form a small ATPAse domain (RuvB-S) region; sequence TVKELMEIIK…LVEKTMDILE (71 aa). The head domain (RuvB-H) stretch occupies residues 252–343; that stretch reads KLGLDEMDRK…DESLRKSDES (92 aa). DNA contacts are provided by arginine 307 and arginine 312.

It belongs to the RuvB family. In terms of assembly, homohexamer. Forms an RuvA(8)-RuvB(12)-Holliday junction (HJ) complex. HJ DNA is sandwiched between 2 RuvA tetramers; dsDNA enters through RuvA and exits via RuvB. An RuvB hexamer assembles on each DNA strand where it exits the tetramer. Each RuvB hexamer is contacted by two RuvA subunits (via domain III) on 2 adjacent RuvB subunits; this complex drives branch migration. In the full resolvosome a probable DNA-RuvA(4)-RuvB(12)-RuvC(2) complex forms which resolves the HJ.

The protein localises to the cytoplasm. The enzyme catalyses ATP + H2O = ADP + phosphate + H(+). The RuvA-RuvB-RuvC complex processes Holliday junction (HJ) DNA during genetic recombination and DNA repair, while the RuvA-RuvB complex plays an important role in the rescue of blocked DNA replication forks via replication fork reversal (RFR). RuvA specifically binds to HJ cruciform DNA, conferring on it an open structure. The RuvB hexamer acts as an ATP-dependent pump, pulling dsDNA into and through the RuvAB complex. RuvB forms 2 homohexamers on either side of HJ DNA bound by 1 or 2 RuvA tetramers; 4 subunits per hexamer contact DNA at a time. Coordinated motions by a converter formed by DNA-disengaged RuvB subunits stimulates ATP hydrolysis and nucleotide exchange. Immobilization of the converter enables RuvB to convert the ATP-contained energy into a lever motion, pulling 2 nucleotides of DNA out of the RuvA tetramer per ATP hydrolyzed, thus driving DNA branch migration. The RuvB motors rotate together with the DNA substrate, which together with the progressing nucleotide cycle form the mechanistic basis for DNA recombination by continuous HJ branch migration. Branch migration allows RuvC to scan DNA until it finds its consensus sequence, where it cleaves and resolves cruciform DNA. The chain is Holliday junction branch migration complex subunit RuvB from Pseudothermotoga lettingae (strain ATCC BAA-301 / DSM 14385 / NBRC 107922 / TMO) (Thermotoga lettingae).